The following is a 165-amino-acid chain: Xanthine-guanine phosphoribosyltransferase (165 aa).

Residues 41 to 42 and 98 to 106 each bind 5-phospho-alpha-D-ribose 1-diphosphate; these read RG and DDLTDTGKT. Asp-99 contributes to the Mg(2+) binding site. Guanine is bound by residues Asp-102 and Ile-145. Residues Asp-102 and Ile-145 each contribute to the xanthine site. GMP is bound by residues 102–106 and 144–145; these read DTGKT and WI.

This sequence belongs to the purine/pyrimidine phosphoribosyltransferase family. XGPT subfamily. In terms of assembly, homotetramer. Mg(2+) is required as a cofactor.

The protein resides in the cell inner membrane. The enzyme catalyses GMP + diphosphate = guanine + 5-phospho-alpha-D-ribose 1-diphosphate. It catalyses the reaction XMP + diphosphate = xanthine + 5-phospho-alpha-D-ribose 1-diphosphate. The catalysed reaction is IMP + diphosphate = hypoxanthine + 5-phospho-alpha-D-ribose 1-diphosphate. It participates in purine metabolism; GMP biosynthesis via salvage pathway; GMP from guanine: step 1/1. The protein operates within purine metabolism; XMP biosynthesis via salvage pathway; XMP from xanthine: step 1/1. Functionally, purine salvage pathway enzyme that catalyzes the transfer of the ribosyl-5-phosphate group from 5-phospho-alpha-D-ribose 1-diphosphate (PRPP) to the N9 position of the 6-oxopurines guanine and xanthine to form the corresponding ribonucleotides GMP (guanosine 5'-monophosphate) and XMP (xanthosine 5'-monophosphate), with the release of PPi. To a lesser extent, also acts on hypoxanthine. This is Xanthine-guanine phosphoribosyltransferase from Chelativorans sp. (strain BNC1).